The following is a 524-amino-acid chain: 2-isopropylmalate synthase (524 aa).

The 263-residue stretch at 5–267 (VIIFDTTLRD…HTNIRHSEIH (263 aa)) folds into the Pyruvate carboxyltransferase domain. Mn(2+)-binding residues include Asp14, His202, His204, and Asn238. The segment at 392–524 (KLEYLGVQSG…KTDKINTESV (133 aa)) is regulatory domain.

This sequence belongs to the alpha-IPM synthase/homocitrate synthase family. LeuA type 1 subfamily. As to quaternary structure, homodimer. It depends on Mn(2+) as a cofactor.

The protein resides in the cytoplasm. It catalyses the reaction 3-methyl-2-oxobutanoate + acetyl-CoA + H2O = (2S)-2-isopropylmalate + CoA + H(+). The protein operates within amino-acid biosynthesis; L-leucine biosynthesis; L-leucine from 3-methyl-2-oxobutanoate: step 1/4. Functionally, catalyzes the condensation of the acetyl group of acetyl-CoA with 3-methyl-2-oxobutanoate (2-ketoisovalerate) to form 3-carboxy-3-hydroxy-4-methylpentanoate (2-isopropylmalate). The polypeptide is 2-isopropylmalate synthase (Aeromonas hydrophila subsp. hydrophila (strain ATCC 7966 / DSM 30187 / BCRC 13018 / CCUG 14551 / JCM 1027 / KCTC 2358 / NCIMB 9240 / NCTC 8049)).